We begin with the raw amino-acid sequence, 200 residues long: Ribonuclease HII (200 aa).

In terms of domain architecture, RNase H type-2 spans 14-200 (SRLAGVDEVG…FAPVKQWQLL (187 aa)). Positions 20, 21, and 112 each coordinate a divalent metal cation.

This sequence belongs to the RNase HII family. Mn(2+) serves as cofactor. It depends on Mg(2+) as a cofactor.

The protein resides in the cytoplasm. The catalysed reaction is Endonucleolytic cleavage to 5'-phosphomonoester.. In terms of biological role, endonuclease that specifically degrades the RNA of RNA-DNA hybrids. This is Ribonuclease HII from Chromohalobacter salexigens (strain ATCC BAA-138 / DSM 3043 / CIP 106854 / NCIMB 13768 / 1H11).